The sequence spans 754 residues: Pentatricopeptide repeat-containing protein At3g53700, chloroplastic (754 aa).

A chloroplast-targeting transit peptide spans 1 to 72 (MAFSSCLKFY…DSAALRLFNL (72 aa)). 17 PPR repeats span residues 82–116 (EPAL…RCEM), 117–152 (GTST…GLKP), 153–187 (DTHF…GIKP), 188–222 (DVST…GLVP), 223–257 (DEKT…GCSW), 258–288 (SNVS…MSNQ), 294–328 (DQYT…GYDP), 329–363 (DVYT…DCSP), 364–398 (NTVT…GILP), 399–433 (DVCT…GCEP), 434–468 (DEFT…GCAR), 469–503 (SVIT…GVSR), 504–538 (NSVT…GQKP), 539–573 (DKYT…GCEP), 574–608 (DIVT…GINL), 609–643 (TPHA…NEAP), and 645–680 (DAVS…GFVP).

It belongs to the PPR family. P subfamily.

It is found in the plastid. The protein resides in the chloroplast. In terms of biological role, may be involved in female gametophyte development. This Arabidopsis thaliana (Mouse-ear cress) protein is Pentatricopeptide repeat-containing protein At3g53700, chloroplastic (MEE40).